The chain runs to 156 residues: Snaclec A11 (156 aa).

Positions 1-23 (MGRSISVSFGLLVVFLSLSGTGA) are cleaved as a signal peptide. Disulfide bonds link Cys-27–Cys-38, Cys-55–Cys-154, and Cys-129–Cys-146. In terms of domain architecture, C-type lectin spans 34 to 155 (YDQHCYQAVD…CGQPYRFTCE (122 aa)).

The protein belongs to the snaclec family. As to quaternary structure, heterodimer; disulfide-linked. As to expression, expressed by the venom gland.

The protein localises to the secreted. Interferes with one step of hemostasis (modulation of platelet aggregation, or coagulation cascade, for example). The protein is Snaclec A11 of Macrovipera lebetinus (Levantine viper).